The sequence spans 318 residues: NADH-ubiquinone oxidoreductase chain 1 (318 aa).

Transmembrane regions (helical) follow at residues 2–22 (FLMNILCLIIPILLAMAFLTL), 70–90 (MFILAPTLAFSLALSMWIPMP), 100–120 (LGVLFILALSSLAVYSILWSG), 136–156 (VAQTISYEVTLAIILLSIMML), 171–191 (HLWLIFPLWPLAMMWFISTLA), 231–251 (IIMMNALTTILFLGALHNPLF), 253–273 (ELFTVNFVTKTLLLTVTFLWV), and 294–314 (LPLTLALCMLHVSTPTMLAGI).

Belongs to the complex I subunit 1 family.

The protein resides in the mitochondrion inner membrane. It catalyses the reaction a ubiquinone + NADH + 5 H(+)(in) = a ubiquinol + NAD(+) + 4 H(+)(out). Functionally, core subunit of the mitochondrial membrane respiratory chain NADH dehydrogenase (Complex I) that is believed to belong to the minimal assembly required for catalysis. Complex I functions in the transfer of electrons from NADH to the respiratory chain. The immediate electron acceptor for the enzyme is believed to be ubiquinone. The chain is NADH-ubiquinone oxidoreductase chain 1 (MT-ND1) from Priodontes maximus (Giant armadillo).